The sequence spans 362 residues: E3 ubiquitin-protein ligase TM129 (362 aa).

Residues Met-1–Val-6 are Lumenal-facing. A helical membrane pass occupies residues Thr-7–Tyr-27. Residues Ser-28–Thr-56 lie on the Cytoplasmic side of the membrane. A helical transmembrane segment spans residues Ser-57 to Ala-77. Residues Ala-78 to Gln-94 lie on the Lumenal side of the membrane. The helical transmembrane segment at Leu-95–Ser-115 threads the bilayer. Residues Trp-116–Arg-362 are Cytoplasmic-facing. The RING-type; degenerate zinc-finger motif lies at Cys-285–Arg-350.

It belongs to the TMEM129 family. As to quaternary structure, integral component of ER-resident dislocation complexes.

It is found in the endoplasmic reticulum membrane. The catalysed reaction is S-ubiquitinyl-[E2 ubiquitin-conjugating enzyme]-L-cysteine + [acceptor protein]-L-lysine = [E2 ubiquitin-conjugating enzyme]-L-cysteine + N(6)-ubiquitinyl-[acceptor protein]-L-lysine.. The protein operates within protein modification; protein ubiquitination. Its function is as follows. E3 ubiquitin-protein ligase involved in ER-associated protein degradation, preferentially associates with the E2 enzyme UBE2J2. Exploited by viral US11 proteins to mediate HLA class I proteins degradation. This Mus musculus (Mouse) protein is E3 ubiquitin-protein ligase TM129 (Tmem129).